Here is a 293-residue protein sequence, read N- to C-terminus: Ribosomal RNA small subunit methyltransferase H (293 aa).

Residues 31 to 33 (GGY), Asp-49, Phe-76, Asp-97, and Gln-104 each bind S-adenosyl-L-methionine.

This sequence belongs to the methyltransferase superfamily. RsmH family.

Its subcellular location is the cytoplasm. It catalyses the reaction cytidine(1402) in 16S rRNA + S-adenosyl-L-methionine = N(4)-methylcytidine(1402) in 16S rRNA + S-adenosyl-L-homocysteine + H(+). Its function is as follows. Specifically methylates the N4 position of cytidine in position 1402 (C1402) of 16S rRNA. This Wolbachia sp. subsp. Drosophila simulans (strain wRi) protein is Ribosomal RNA small subunit methyltransferase H.